The sequence spans 597 residues: (E)-sabinene hydrate synthase, chloroplastic (597 aa).

The transit peptide at 1–47 (MSTISINHVGILRNPLQCKNKRTSINKPWSLSLPRSSPASRLVKPCR) directs the protein to the chloroplast. Mn(2+) contacts are provided by D353 and D357. The short motif at 353–357 (DDVYD) is the DDXXD motif element. 2 homodimerization regions span residues 359–365 (YGTLDEL) and 431–468 (EAGWYENGYTPSLEEYLTNATISIGVPPIVLPVEVSLP). Residues D495 and E503 each contribute to the Mn(2+) site.

Belongs to the terpene synthase family. Homodimer. Requires Mn(2+) as cofactor. Mg(2+) is required as a cofactor.

It localises to the plastid. Its subcellular location is the chloroplast. The catalysed reaction is (2E)-geranyl diphosphate + H2O = sabinene hydrate + diphosphate. Its pathway is secondary metabolite biosynthesis; terpenoid biosynthesis. In terms of biological role, involved in the biosynthesis of phenolic monoterpenes natural products. Monoterpene synthase which catalyzes the conversion of geranyl diphosphate (GPP) to sabinene hydrate, specifically (E)-sabinene hydrate, and the formation of minor amounts and traces of several other monoterpenes (e.g. mainly alpha-pinene, limonene and alpha-terpineol). The polypeptide is (E)-sabinene hydrate synthase, chloroplastic (Thymus vulgaris (Thyme)).